We begin with the raw amino-acid sequence, 239 residues long: Ribonuclease HII (239 aa).

Residues 30 to 221 enclose the RNase H type-2 domain; that stretch reads GPVAGVDEVG…VRRLVTAGTP (192 aa). Positions 36, 37, and 130 each coordinate a divalent metal cation.

The protein belongs to the RNase HII family. Mn(2+) serves as cofactor. It depends on Mg(2+) as a cofactor.

The protein localises to the cytoplasm. It catalyses the reaction Endonucleolytic cleavage to 5'-phosphomonoester.. In terms of biological role, endonuclease that specifically degrades the RNA of RNA-DNA hybrids. This Mycobacterium sp. (strain JLS) protein is Ribonuclease HII.